Here is a 461-residue protein sequence, read N- to C-terminus: tRNA modification GTPase MnmE (461 aa).

The (6S)-5-formyl-5,6,7,8-tetrahydrofolate site is built by Arg-27, Glu-89, and Arg-128. The region spanning 224–382 is the TrmE-type G domain; that stretch reads GLATAIVGRP…LEELINKLFF (159 aa). Asn-234 contacts K(+). Residues 234–239, 253–259, and 278–281 each bind GTP; these read NVGKSS, TDVAGTT, and DTAG. Ser-238 contributes to the Mg(2+) binding site. K(+)-binding residues include Thr-253, Val-255, and Thr-258. A Mg(2+)-binding site is contributed by Thr-259. Lys-461 contacts (6S)-5-formyl-5,6,7,8-tetrahydrofolate.

The protein belongs to the TRAFAC class TrmE-Era-EngA-EngB-Septin-like GTPase superfamily. TrmE GTPase family. In terms of assembly, homodimer. Heterotetramer of two MnmE and two MnmG subunits. K(+) is required as a cofactor.

It localises to the cytoplasm. In terms of biological role, exhibits a very high intrinsic GTPase hydrolysis rate. Involved in the addition of a carboxymethylaminomethyl (cmnm) group at the wobble position (U34) of certain tRNAs, forming tRNA-cmnm(5)s(2)U34. The polypeptide is tRNA modification GTPase MnmE (Lactobacillus helveticus (strain DPC 4571)).